A 275-amino-acid chain; its full sequence is Gap junction gamma-3 protein (275 aa).

Topologically, residues 1 to 22 (MCGSFLRRVAAEESRHPTPVGR) are cytoplasmic. Residues 23–43 (LLLPALLGLRLVLLAAGGTGV) traverse the membrane as a helical segment. Topologically, residues 44-77 (FGGGEEQSEFVCHTQQAGCKAVCYDAFHPLSPLR) are extracellular. The helical transmembrane segment at 78–98 (FWAFQVTLVAVPSALYMGFIL) threads the bilayer. At 99 to 134 (YHVIWHWEASEKVKTEEETLSQGEKGGEASRAGSSR) the chain is on the cytoplasmic side. The chain crosses the membrane as a helical span at residues 135-155 (LLWAYVAQLGVRLALEGAALG). Over 156–196 (GQYHLYGFRMPSSFVCRLEPCLGSTNCYLSRPSEKSIFLKT) the chain is Extracellular. The chain crosses the membrane as a helical span at residues 197-217 (MFGVTGLCLLFTLLELVLLGL). At 218–275 (GRWWRIWRHKSPSSNYSPTSQSAKRCKAPTDNFPVVEIRERPGEAGERGSEVPLSARP) the chain is on the cytoplasmic side. Residues 254–267 (EIRERPGEAGERGS) are compositionally biased toward basic and acidic residues. Residues 254-275 (EIRERPGEAGERGSEVPLSARP) form a disordered region.

It belongs to the connexin family. Gamma-type subfamily. As to quaternary structure, a connexon is composed of a hexamer of connexins.

It is found in the cell membrane. It localises to the cell junction. Its subcellular location is the gap junction. Functionally, one gap junction consists of a cluster of closely packed pairs of transmembrane channels, the connexons, through which materials of low MW diffuse from one cell to a neighboring cell. The polypeptide is Gap junction gamma-3 protein (GJC3) (Bos taurus (Bovine)).